Reading from the N-terminus, the 268-residue chain is Tryptophan synthase alpha chain (268 aa).

Residues E49 and D60 each act as proton acceptor in the active site.

The protein belongs to the TrpA family. In terms of assembly, tetramer of two alpha and two beta chains.

The catalysed reaction is (1S,2R)-1-C-(indol-3-yl)glycerol 3-phosphate + L-serine = D-glyceraldehyde 3-phosphate + L-tryptophan + H2O. The protein operates within amino-acid biosynthesis; L-tryptophan biosynthesis; L-tryptophan from chorismate: step 5/5. Functionally, the alpha subunit is responsible for the aldol cleavage of indoleglycerol phosphate to indole and glyceraldehyde 3-phosphate. The protein is Tryptophan synthase alpha chain of Shigella sonnei (strain Ss046).